A 481-amino-acid chain; its full sequence is Mechanosensory protein 2 (481 aa).

Residues 1–22 show a composition bias toward low complexity; it reads MSATMSSARNSVVSLSSNGSVK. Disordered stretches follow at residues 1–67 and 80–104; these read MSAT…MATR and SANS…GNGK. The segment covering 27–38 has biased composition (polar residues); sequence LVSNERSSSIQQ. Over residues 86 to 104 the composition is skewed to basic and acidic residues; sequence DSVKKEKQAEKDVEKGNGK. The helical transmembrane segment at 115-135 threads the bilayer; the sequence is GVCGWILTILSYLLIFFTLPI. The segment covering 403–421 has biased composition (gly residues); that stretch reads EGGGGHGHSHGGGGGGLGS. Positions 403 to 481 are disordered; that stretch reads EGGGGHGHSH…SQLDPALLIR (79 aa). A compositionally biased stretch (low complexity) spans 433 to 447; it reads SGPSTTTTSGRPLLR. Residues 463-473 are compositionally biased toward polar residues; sequence APNQSQTSVSQ.

The protein belongs to the band 7/mec-2 family. As to quaternary structure, component of a non-voltage-gated amiloride-sensitive cation channel complex (also called the degenerin channel complex) composed of at least the mec-2, mec-4, mec-6 and mec-10 subunits; the complex mediates mechanotransduction in touch cells. Interacts with mec-6 and mec-4.

It is found in the membrane. In terms of biological role, subunit of an amiloride-sensitive cation channel (degenerin channel complex) permeable for sodium, potassium, lithium and N-methylglucamine, and required for mechanosensory transduction (touch sensitivity). Positively regulates the activity of the putative mechanosensory transduction channel. May link the mechanosensory channel and the microtubule cytoskeleton of the touch receptor neurons. Required for the function of a set of six touch receptor neurons. In Caenorhabditis elegans, this protein is Mechanosensory protein 2.